Reading from the N-terminus, the 1012-residue chain is Structural polyprotein (1012 aa).

Asp-30 provides a ligand contact to a divalent metal cation. Residues 513-755 (ADKGYEVVAN…AGRQYHLAMA (243 aa)) enclose the Peptidase S50 domain. The active-site Nucleophile is Ser-652. Lys-692 is a catalytic residue. 2 disordered regions span residues 837-857 (GYGVEARGPTPEEAQRKKDTR) and 968-1012 (TAME…EDLE). Residues 975–986 (RNPRRAPPKPKP) show a composition bias toward basic residues. The interval 1003–1012 (IRTVSDEDLE) is interaction with VP1 protein.

Homotrimer. A central divalent metal stabilizes the VP2 trimer. Interacts with host ITGA4/ITGB1. As to quaternary structure, homodimer. Interacts (via C-terminus) with VP1 in the cytoplasm. Interacts with VP2. Post-translationally, specific enzymatic cleavages yield mature proteins. The capsid assembly seems to be regulated by polyprotein processing. The protease VP4 cleaves itself off the polyprotein, thus releasing pre-VP2 and VP3 within the infected cell. During capsid assembly, the C-terminus of pre-VP2 is further processed by VP4, giving rise to VP2, the external capsid protein and three small peptides that all stay closely associated with the capsid.

It localises to the virion. It is found in the host cytoplasm. Its function is as follows. Capsid protein VP2 self assembles to form an icosahedral capsid with a T=13 symmetry, about 70 nm in diameter, and consisting of 260 VP2 trimers. The capsid encapsulates the genomic dsRNA. VP2 is also involved in attachment and entry into the host cell by interacting with host ITGA4/ITGB1. In terms of biological role, the precursor of VP2 plays an important role in capsid assembly. First, pre-VP2 and VP2 oligomers assemble to form a procapsid. Then, the pre-VP2 intermediates may be processed into VP2 proteins by proteolytic cleavage mediated by VP4 to obtain the mature virion. The final capsid is composed of pentamers and hexamers but VP2 has a natural tendency to assemble into all-pentameric structures. Therefore pre-VP2 may be required to allow formation of the hexameric structures. Protease VP4 is a serine protease that cleaves the polyprotein into its final products. Pre-VP2 is first partially cleaved, and may be completely processed by VP4 upon capsid maturation. Functionally, capsid protein VP3 plays a key role in virion assembly by providing a scaffold for the capsid made of VP2. May self-assemble to form a T=4-like icosahedral inner-capsid composed of at least 180 trimers. Plays a role in genomic RNA packaging by recruiting VP1 into the capsid and interacting with the dsRNA genome segments to form a ribonucleoprotein complex. Additionally, the interaction of the VP3 C-terminal tail with VP1 removes the inherent structural blockade of the polymerase active site. Thus, VP3 can also function as a transcriptional activator. Its function is as follows. Structural peptide 1 is a small peptide derived from pre-VP2 C-terminus. It destabilizes and perforates cell membranes, suggesting a role during entry. In terms of biological role, structural peptide 2 is a small peptide derived from pVP2 C-terminus. It is not essential for the virus viability, but viral growth is affected when missing. Structural peptide 3 is a small peptide derived from pVP2 C-terminus. It is not essential for the virus viability, but viral growth is affected when missing. Functionally, structural peptide 4 is a small peptide derived from pVP2 C-terminus. It is essential for the virus viability. The protein is Structural polyprotein of Gallus gallus (Chicken).